The chain runs to 193 residues: ATP-dependent Clp protease proteolytic subunit (193 aa).

The active-site Nucleophile is serine 98. The active site involves histidine 123.

This sequence belongs to the peptidase S14 family. In terms of assembly, fourteen ClpP subunits assemble into 2 heptameric rings which stack back to back to give a disk-like structure with a central cavity, resembling the structure of eukaryotic proteasomes.

Its subcellular location is the cytoplasm. The enzyme catalyses Hydrolysis of proteins to small peptides in the presence of ATP and magnesium. alpha-casein is the usual test substrate. In the absence of ATP, only oligopeptides shorter than five residues are hydrolyzed (such as succinyl-Leu-Tyr-|-NHMec, and Leu-Tyr-Leu-|-Tyr-Trp, in which cleavage of the -Tyr-|-Leu- and -Tyr-|-Trp bonds also occurs).. In terms of biological role, cleaves peptides in various proteins in a process that requires ATP hydrolysis. Has a chymotrypsin-like activity. Plays a major role in the degradation of misfolded proteins. This chain is ATP-dependent Clp protease proteolytic subunit, found in Histophilus somni (strain 2336) (Haemophilus somnus).